Consider the following 109-residue polypeptide: Nucleoid-associated protein Swoo_1794 (109 aa).

Positions 88 to 109 are disordered; sequence QKDKMAEVTGGMQLPPGMKMPF.

This sequence belongs to the YbaB/EbfC family. Homodimer.

It localises to the cytoplasm. The protein resides in the nucleoid. Functionally, binds to DNA and alters its conformation. May be involved in regulation of gene expression, nucleoid organization and DNA protection. The sequence is that of Nucleoid-associated protein Swoo_1794 from Shewanella woodyi (strain ATCC 51908 / MS32).